The following is a 130-amino-acid chain: Small ribosomal subunit protein uS8 (130 aa).

This sequence belongs to the universal ribosomal protein uS8 family. As to quaternary structure, part of the 30S ribosomal subunit. Contacts proteins S5 and S12.

Functionally, one of the primary rRNA binding proteins, it binds directly to 16S rRNA central domain where it helps coordinate assembly of the platform of the 30S subunit. The polypeptide is Small ribosomal subunit protein uS8 (Pectobacterium atrosepticum (strain SCRI 1043 / ATCC BAA-672) (Erwinia carotovora subsp. atroseptica)).